The chain runs to 475 residues: L-seryl-tRNA(Sec) selenium transferase (475 aa).

The residue at position 295 (Lys-295) is an N6-(pyridoxal phosphate)lysine.

It belongs to the SelA family. Pyridoxal 5'-phosphate is required as a cofactor.

It is found in the cytoplasm. The catalysed reaction is L-seryl-tRNA(Sec) + selenophosphate + H(+) = L-selenocysteinyl-tRNA(Sec) + phosphate. It participates in aminoacyl-tRNA biosynthesis; selenocysteinyl-tRNA(Sec) biosynthesis; selenocysteinyl-tRNA(Sec) from L-seryl-tRNA(Sec) (bacterial route): step 1/1. Functionally, converts seryl-tRNA(Sec) to selenocysteinyl-tRNA(Sec) required for selenoprotein biosynthesis. The polypeptide is L-seryl-tRNA(Sec) selenium transferase (Desulfovibrio desulfuricans (strain ATCC 27774 / DSM 6949 / MB)).